Reading from the N-terminus, the 282-residue chain is Bis(5'-nucleosyl)-tetraphosphatase, symmetrical (282 aa).

It belongs to the Ap4A hydrolase family.

The enzyme catalyses P(1),P(4)-bis(5'-adenosyl) tetraphosphate + H2O = 2 ADP + 2 H(+). Functionally, hydrolyzes diadenosine 5',5'''-P1,P4-tetraphosphate to yield ADP. The polypeptide is Bis(5'-nucleosyl)-tetraphosphatase, symmetrical (Klebsiella pneumoniae (strain 342)).